We begin with the raw amino-acid sequence, 511 residues long: Steroid 17-alpha-hydroxylase/17,20 lyase (511 aa).

Cys442 is a heme binding site.

It belongs to the cytochrome P450 family. Requires heme as cofactor.

The protein resides in the endoplasmic reticulum membrane. It is found in the microsome membrane. It catalyses the reaction a C21-steroid + reduced [NADPH--hemoprotein reductase] + O2 = a 17alpha-hydroxy-C21-steroid + oxidized [NADPH--hemoprotein reductase] + H2O + H(+). The catalysed reaction is progesterone + reduced [NADPH--hemoprotein reductase] + O2 = 17alpha-hydroxyprogesterone + oxidized [NADPH--hemoprotein reductase] + H2O + H(+). The enzyme catalyses pregnenolone + reduced [NADPH--hemoprotein reductase] + O2 = 17alpha-hydroxypregnenolone + oxidized [NADPH--hemoprotein reductase] + H2O + H(+). It carries out the reaction 17alpha-hydroxyprogesterone + reduced [NADPH--hemoprotein reductase] + O2 = androst-4-ene-3,17-dione + acetate + oxidized [NADPH--hemoprotein reductase] + H2O + 2 H(+). It catalyses the reaction 17alpha-hydroxyprogesterone + reduced [NADPH--hemoprotein reductase] + O2 = 16alpha,17alpha-dihydroxyprogesterone + oxidized [NADPH--hemoprotein reductase] + H2O + H(+). The catalysed reaction is 16alpha,17alpha-dihydroxyprogesterone + reduced [NADPH--hemoprotein reductase] + O2 = 6beta,16alpha,17alpha-trihydroxyprogesterone + oxidized [NADPH--hemoprotein reductase] + H2O + H(+). The enzyme catalyses 17alpha-hydroxypregnenolone + reduced [NADPH--hemoprotein reductase] + O2 = 3beta-hydroxyandrost-5-en-17-one + acetate + oxidized [NADPH--hemoprotein reductase] + H2O + 2 H(+). It carries out the reaction 16alpha,17alpha-dihydroxypregnenolone + reduced [NADPH--hemoprotein reductase] + O2 = 3beta,16alpha-dihydroxy-androst-5-en-17-one + acetate + oxidized [NADPH--hemoprotein reductase] + H2O + 2 H(+). It catalyses the reaction 3beta-hydroxyandrost-5-en-17-one + reduced [NADPH--hemoprotein reductase] + O2 = 3beta,16alpha-dihydroxy-androst-5-en-17-one + oxidized [NADPH--hemoprotein reductase] + H2O + H(+). The catalysed reaction is androst-4-ene-3,17-dione + reduced [NADPH--hemoprotein reductase] + O2 = 16alpha-hydroxyandrost-4-ene-3,17-dione + oxidized [NADPH--hemoprotein reductase] + H2O + H(+). Its pathway is steroid hormone biosynthesis. It functions in the pathway steroid biosynthesis; glucocorticoid biosynthesis. With respect to regulation, regulated predominantly by intracellular cAMP levels. The 17,20-lyase activity is stimulated by cytochrome b5, which acts as an allosteric effector increasing the Vmax of the lyase activity. In terms of biological role, a cytochrome P450 monooxygenase involved in corticoid and androgen biosynthesis. Catalyzes 17-alpha hydroxylation of C21 steroids, which is common for both pathways. A second oxidative step, required only for androgen synthesis, involves an acyl-carbon cleavage. The 17-alpha hydroxy intermediates, as part of adrenal glucocorticoids biosynthesis pathway, are precursors of cortisol. Hydroxylates steroid hormones, pregnenolone and progesterone to form 17-alpha hydroxy metabolites, followed by the cleavage of the C17-C20 bond to form C19 steroids, dehydroepiandrosterone (DHEA) and androstenedione. Has 16-alpha hydroxylase activity. Catalyzes 16-alpha hydroxylation of 17-alpha hydroxy pregnenolone, followed by the cleavage of the C17-C20 bond to form 16-alpha-hydroxy DHEA. Also 16-alpha hydroxylates androgens, relevant for estriol synthesis. Mechanistically, uses molecular oxygen inserting one oxygen atom into a substrate, and reducing the second into a water molecule, with two electrons provided by NADPH via cytochrome P450 reductase (CPR; NADPH-ferrihemoprotein reductase). This chain is Steroid 17-alpha-hydroxylase/17,20 lyase (CYP17A1), found in Mesocricetus auratus (Golden hamster).